The chain runs to 315 residues: Ferrochelatase (315 aa).

Residues His193 and Glu273 each coordinate Fe cation.

Belongs to the ferrochelatase family.

The protein localises to the cytoplasm. The enzyme catalyses heme b + 2 H(+) = protoporphyrin IX + Fe(2+). It participates in porphyrin-containing compound metabolism; protoheme biosynthesis; protoheme from protoporphyrin-IX: step 1/1. In terms of biological role, catalyzes the ferrous insertion into protoporphyrin IX. The sequence is that of Ferrochelatase from Wolbachia pipientis wMel.